Consider the following 607-residue polypeptide: Chaperone protein DnaK (607 aa).

A Phosphothreonine; by autocatalysis modification is found at Thr-173. Composition is skewed to basic and acidic residues over residues 490–509 and 524–542; these read EQNA…RNEA and GDNV…KEAL. 3 disordered regions span residues 490–510, 524–555, and 574–607; these read EQNA…NEAD, GDNV…EDIK, and QQAQ…KDNK. Positions 574–587 are enriched in polar residues; that stretch reads QQAQQGDAAGSNQS. Residues 595-607 show a composition bias toward basic and acidic residues; sequence TEVKDDDDKKDNK.

This sequence belongs to the heat shock protein 70 family.

In terms of biological role, acts as a chaperone. The protein is Chaperone protein DnaK of Staphylococcus carnosus (strain TM300).